Consider the following 220-residue polypeptide: Deoxyribose-phosphate aldolase (220 aa).

Asp-89 functions as the Proton donor/acceptor in the catalytic mechanism. Lys-151 functions as the Schiff-base intermediate with acetaldehyde in the catalytic mechanism. Catalysis depends on Lys-180, which acts as the Proton donor/acceptor.

The protein belongs to the DeoC/FbaB aldolase family. DeoC type 1 subfamily.

Its subcellular location is the cytoplasm. It catalyses the reaction 2-deoxy-D-ribose 5-phosphate = D-glyceraldehyde 3-phosphate + acetaldehyde. Its pathway is carbohydrate degradation; 2-deoxy-D-ribose 1-phosphate degradation; D-glyceraldehyde 3-phosphate and acetaldehyde from 2-deoxy-alpha-D-ribose 1-phosphate: step 2/2. Functionally, catalyzes a reversible aldol reaction between acetaldehyde and D-glyceraldehyde 3-phosphate to generate 2-deoxy-D-ribose 5-phosphate. The protein is Deoxyribose-phosphate aldolase of Streptococcus equi subsp. equi (strain 4047).